Here is a 472-residue protein sequence, read N- to C-terminus: GTPase Der (472 aa).

EngA-type G domains follow at residues 3-166 (PVIA…PEQE) and 176-349 (IRIG…DSAM). GTP is bound by residues 9-16 (GRPNVGKS), 56-60 (DTGGI), 118-121 (NKID), 182-189 (GRPNVGKS), 229-233 (DTAGV), and 294-297 (NKWD). Positions 350–434 (AKWSTNQLTT…PIRFEFRSGE (85 aa)) constitute a KH-like domain. The disordered stretch occupies residues 433–472 (GENPFAGKKNKLSPRQQKKKERLMKHVKKLKHKQKRKKSR). Residues 440–472 (KKNKLSPRQQKKKERLMKHVKKLKHKQKRKKSR) are compositionally biased toward basic residues.

The protein belongs to the TRAFAC class TrmE-Era-EngA-EngB-Septin-like GTPase superfamily. EngA (Der) GTPase family. As to quaternary structure, associates with the 50S ribosomal subunit.

GTPase that plays an essential role in the late steps of ribosome biogenesis. The sequence is that of GTPase Der from Hahella chejuensis (strain KCTC 2396).